A 377-amino-acid chain; its full sequence is Opsin-2 (377 aa).

Residues 1–57 (MNNQSENYYHGAQFEALKSAGAIEMLGDGLTGDDLAAIPEHWLSYPAPPASAHTALA) lie on the Extracellular side of the membrane. The N-linked (GlcNAc...) asparagine glycan is linked to asparagine 3. The helical transmembrane segment at 58–78 (LLYIFFTFAALVGNGMVIFIF) threads the bilayer. Over 79–89 (STTKSLRTSSN) the chain is Cytoplasmic. The helical transmembrane segment at 90–110 (FLVLNLAILDFIMMAKAPIFI) threads the bilayer. Residues 111-126 (YNSAMRGFAVGTVGCQ) are Extracellular-facing. Cysteines 125 and 202 form a disulfide. A helical transmembrane segment spans residues 127–146 (IFALMGAYSGIGAGMTNACI). Residues 147–166 (AYDRHSTITRPLDGRLSEGK) are Cytoplasmic-facing. Residues 167–187 (VLLMVAFVWIYSTPWALLPLL) traverse the membrane as a helical segment. Residues 188-214 (KIWGRYVPEGYLTSCSFDYLTNTFDTK) are Extracellular-facing. A helical transmembrane segment spans residues 215 to 235 (LFVACIFTCSYVFPMSLIIYF). Residues 236 to 283 (YSGIVKQVFAHEAALREQAKKMNVESLRANQGGSSESAEIRIAKAALT) are Cytoplasmic-facing. The helical transmembrane segment at 284–304 (VCFLFVASWTPYGVMALIGAF) threads the bilayer. Residues 305–314 (GNQQLLTPGV) are Extracellular-facing. The helical transmembrane segment at 315–335 (TMIPAVACKAVACISPWVYAI) threads the bilayer. At 336 to 377 (RHPMYRQELQRRMPWLQIDEPDDTVSTATSNTTNSAPPAATA) the chain is on the cytoplasmic side. Residues 355–377 (EPDDTVSTATSNTTNSAPPAATA) form a disordered region. Residues 361–377 (STATSNTTNSAPPAATA) show a composition bias toward low complexity.

Belongs to the G-protein coupled receptor 1 family. Opsin subfamily. As to expression, in the retina, expression is essentially uniformly distributed, but a higher level is seen in the dorsal region of the retina and in the dorsal rim retinulae.

It localises to the membrane. In terms of biological role, visual pigments are the light-absorbing molecules that mediate vision. They consist of an apoprotein, opsin, covalently linked to cis-retinal. May play a role in photoperiodic photoreception. In Manduca sexta (Tobacco hawkmoth), this protein is Opsin-2 (OP2).